We begin with the raw amino-acid sequence, 278 residues long: Aliphatic sulfonates import ATP-binding protein SsuB (278 aa).

An ABC transporter domain is found at 15 to 236 (LVLRDLSKRF…SQGDAAFAAL (222 aa)). 47-54 (GRSGCGKS) lines the ATP pocket. The segment covering 251-264 (PERESFTHPNDGEP) has biased composition (basic and acidic residues). A disordered region spans residues 251 to 278 (PERESFTHPNDGEPRWPGVPAHGVRWAV).

This sequence belongs to the ABC transporter superfamily. Aliphatic sulfonates importer (TC 3.A.1.17.2) family. In terms of assembly, the complex is composed of two ATP-binding proteins (SsuB), two transmembrane proteins (SsuC) and a solute-binding protein (SsuA).

It localises to the cell inner membrane. The enzyme catalyses ATP + H2O + aliphatic sulfonate-[sulfonate-binding protein]Side 1 = ADP + phosphate + aliphatic sulfonateSide 2 + [sulfonate-binding protein]Side 1.. Its function is as follows. Part of the ABC transporter complex SsuABC involved in aliphatic sulfonates import. Responsible for energy coupling to the transport system. The polypeptide is Aliphatic sulfonates import ATP-binding protein SsuB (Albidiferax ferrireducens (strain ATCC BAA-621 / DSM 15236 / T118) (Rhodoferax ferrireducens)).